The chain runs to 342 residues: D-erythrose-4-phosphate dehydrogenase (342 aa).

Residue 12–13 (RI) participates in NAD(+) binding. Residues 154 to 156 (SCT), Arg-200, 213 to 214 (TK), and Arg-236 each bind substrate. The active-site Nucleophile is Cys-155. Position 318 (Asn-318) interacts with NAD(+).

It belongs to the glyceraldehyde-3-phosphate dehydrogenase family. Epd subfamily. As to quaternary structure, homotetramer.

It localises to the cytoplasm. It catalyses the reaction D-erythrose 4-phosphate + NAD(+) + H2O = 4-phospho-D-erythronate + NADH + 2 H(+). It functions in the pathway cofactor biosynthesis; pyridoxine 5'-phosphate biosynthesis; pyridoxine 5'-phosphate from D-erythrose 4-phosphate: step 1/5. Its function is as follows. Catalyzes the NAD-dependent conversion of D-erythrose 4-phosphate to 4-phosphoerythronate. The chain is D-erythrose-4-phosphate dehydrogenase from Klebsiella pneumoniae (strain 342).